A 366-amino-acid polypeptide reads, in one-letter code: NADH-quinone oxidoreductase subunit D (366 aa).

This sequence belongs to the complex I 49 kDa subunit family. In terms of assembly, NDH-1 is composed of 14 different subunits. Subunits NuoB, C, D, E, F, and G constitute the peripheral sector of the complex.

The protein localises to the cell membrane. It carries out the reaction a quinone + NADH + 5 H(+)(in) = a quinol + NAD(+) + 4 H(+)(out). Its function is as follows. NDH-1 shuttles electrons from NADH, via FMN and iron-sulfur (Fe-S) centers, to quinones in the respiratory chain. The immediate electron acceptor for the enzyme in this species is believed to be a menaquinone. Couples the redox reaction to proton translocation (for every two electrons transferred, four hydrogen ions are translocated across the cytoplasmic membrane), and thus conserves the redox energy in a proton gradient. The chain is NADH-quinone oxidoreductase subunit D from Bacillus anthracis.